A 485-amino-acid polypeptide reads, in one-letter code: UDP-N-acetylmuramate--L-alanine ligase (485 aa).

120 to 126 is an ATP binding site; the sequence is GSHGKTT.

It belongs to the MurCDEF family.

Its subcellular location is the cytoplasm. The catalysed reaction is UDP-N-acetyl-alpha-D-muramate + L-alanine + ATP = UDP-N-acetyl-alpha-D-muramoyl-L-alanine + ADP + phosphate + H(+). It functions in the pathway cell wall biogenesis; peptidoglycan biosynthesis. Functionally, cell wall formation. The sequence is that of UDP-N-acetylmuramate--L-alanine ligase from Rickettsia conorii (strain ATCC VR-613 / Malish 7).